A 174-amino-acid chain; its full sequence is Nucleoside-triphosphatase THEP1 (174 aa).

ATP-binding positions include 7–14 (GRPGVGKT) and 94–101 (LIIVDEIG).

The protein belongs to the THEP1 NTPase family.

It carries out the reaction a ribonucleoside 5'-triphosphate + H2O = a ribonucleoside 5'-diphosphate + phosphate + H(+). Functionally, has nucleotide phosphatase activity towards ATP, GTP, CTP, TTP and UTP. May hydrolyze nucleoside diphosphates with lower efficiency. The protein is Nucleoside-triphosphatase THEP1 of Thermotoga maritima (strain ATCC 43589 / DSM 3109 / JCM 10099 / NBRC 100826 / MSB8).